Consider the following 449-residue polypeptide: Methylenetetrahydrofolate--tRNA-(uracil-5-)-methyltransferase TrmFO (449 aa).

Position 9-14 (G9–G14) interacts with FAD.

Belongs to the MnmG family. TrmFO subfamily. Requires FAD as cofactor.

It localises to the cytoplasm. It catalyses the reaction uridine(54) in tRNA + (6R)-5,10-methylene-5,6,7,8-tetrahydrofolate + NADH + H(+) = 5-methyluridine(54) in tRNA + (6S)-5,6,7,8-tetrahydrofolate + NAD(+). The catalysed reaction is uridine(54) in tRNA + (6R)-5,10-methylene-5,6,7,8-tetrahydrofolate + NADPH + H(+) = 5-methyluridine(54) in tRNA + (6S)-5,6,7,8-tetrahydrofolate + NADP(+). Its function is as follows. Catalyzes the folate-dependent formation of 5-methyl-uridine at position 54 (M-5-U54) in all tRNAs. This Ruegeria pomeroyi (strain ATCC 700808 / DSM 15171 / DSS-3) (Silicibacter pomeroyi) protein is Methylenetetrahydrofolate--tRNA-(uracil-5-)-methyltransferase TrmFO.